A 357-amino-acid polypeptide reads, in one-letter code: 4-hydroxyphenylpyruvate dioxygenase (357 aa).

VOC domains are found at residues 12 to 129 (GFEF…LIDR) and 158 to 313 (IIDH…IFSE). Residues His161, His240, and Glu322 each coordinate Fe cation.

This sequence belongs to the 4HPPD family. Homotetramer. Fe cation serves as cofactor.

The enzyme catalyses 3-(4-hydroxyphenyl)pyruvate + O2 = homogentisate + CO2. It participates in amino-acid degradation; L-phenylalanine degradation; acetoacetate and fumarate from L-phenylalanine: step 3/6. In Pseudomonas sp. (strain P.J. 874), this protein is 4-hydroxyphenylpyruvate dioxygenase (hpd).